The following is a 374-amino-acid chain: Translocating chain-associated membrane protein 1 (374 aa).

Topologically, residues 1 to 29 are cytoplasmic; sequence MAIRKKSNKNPPLLSHEFLLQNHADIVSC. The helical transmembrane segment at 30–50 threads the bilayer; the sequence is LAMLFLLGLMFEVTAKGAIIF. The Lumenal portion of the chain corresponds to 51–76; it reads VALQYNVTRPATEEQATESASLYHYG. A glycan (N-linked (GlcNAc...) asparagine) is linked at Asn56. Residues 77–97 form a helical membrane-spanning segment; it reads IKDLATVLFYMLVAIIIHAII. Residues 98-121 are Cytoplasmic-facing; it reads QEYVLDKINRRMHFSKTKHSKFNE. In terms of domain architecture, TLC spans 117 to 326; sequence SKFNESGQLS…NFQLRRWREH (210 aa). The helical transmembrane segment at 122–142 threads the bilayer; the sequence is SGQLSAFYLFACVWGTFILIS. Residues 143-159 are Lumenal-facing; the sequence is ENYISDPTILWRAYPHN. A helical membrane pass occupies residues 160–180; it reads LMTFQTKFFYISQLAYWLHAF. Residues 181–192 lie on the Cytoplasmic side of the membrane; it reads PELYFQKTKKED. Residues 193-213 traverse the membrane as a helical segment; sequence IPRQLVYIGLYLFHIAGAYLL. The Lumenal portion of the chain corresponds to 214–217; sequence NLNH. Residues 218–238 traverse the membrane as a helical segment; that stretch reads LGLVLLVLHYFVEFLFHISRL. Topologically, residues 239–251 are cytoplasmic; the sequence is FYFSDEKYQKGFS. Residues 252–272 traverse the membrane as a helical segment; it reads LWAVLFVLGRLLTLILSVLTV. At 273 to 297 the chain is on the lumenal side; it reads GFGLARAENQKLDFSTGNFNVLAVR. The chain crosses the membrane as a helical span at residues 298-318; that stretch reads IAVLASICITQAFMMWKFINF. Residues 319 to 374 lie on the Cytoplasmic side of the membrane; it reads QLRRWREHSAFQAPPVKRKPAVTKGRSSRKGTENGVNGTVTSNGADSPRNRKEKSS. The segment at 333–374 is disordered; that stretch reads PVKRKPAVTKGRSSRKGTENGVNGTVTSNGADSPRNRKEKSS. A compositionally biased stretch (basic residues) spans 334-347; sequence VKRKPAVTKGRSSR. Over residues 352 to 363 the composition is skewed to polar residues; it reads NGVNGTVTSNGA. Position 365 is a phosphoserine (Ser365).

It belongs to the TRAM family. Interacts with SEC61B. May interact with Derlin-1/DERL1. N-glycosylated.

It localises to the endoplasmic reticulum membrane. Its function is as follows. Involved in the translocation of nascent protein chains into or through the endoplasmic reticulum (ER) membrane by facilitating the proper chain positioning at the SEC61 channel. Regulates the exposure of nascent secretory protein chain to the cytosol during translocation into the ER. May affect the phospholipid bilayer in the vicinity of the lateral gate of the SEC61 channel, thereby facilitating ER protein transport. Intimately associates with transmembrane (TM) domain of nascent membrane proteins during the entire integration process into the ER membrane. Associates with the second TM domain of G-protein-coupled receptor opsin/OPSD nascent chain in the ER membrane, which may facilitate its integration into the membrane. Under conditions of ER stress, participates in the disposal of misfolded ER membrane proteins during the unfolded protein response (UPR), an integrated stress response (ISR) pathway, by selectively retrotranslocating misfolded ER-membrane proteins from the ER into the cytosol where they are ubiquitinated and degraded by the proteasome. This Mus musculus (Mouse) protein is Translocating chain-associated membrane protein 1.